Here is a 307-residue protein sequence, read N- to C-terminus: 4-hydroxythreonine-4-phosphate dehydrogenase (307 aa).

Residues His126 and Thr127 each coordinate substrate. Residues His156, His195, and His251 each contribute to the a divalent metal cation site. Positions 259, 268, and 277 each coordinate substrate.

It belongs to the PdxA family. As to quaternary structure, homodimer. Zn(2+) is required as a cofactor. It depends on Mg(2+) as a cofactor. Requires Co(2+) as cofactor.

The protein localises to the cytoplasm. The enzyme catalyses 4-(phosphooxy)-L-threonine + NAD(+) = 3-amino-2-oxopropyl phosphate + CO2 + NADH. Its pathway is cofactor biosynthesis; pyridoxine 5'-phosphate biosynthesis; pyridoxine 5'-phosphate from D-erythrose 4-phosphate: step 4/5. In terms of biological role, catalyzes the NAD(P)-dependent oxidation of 4-(phosphooxy)-L-threonine (HTP) into 2-amino-3-oxo-4-(phosphooxy)butyric acid which spontaneously decarboxylates to form 3-amino-2-oxopropyl phosphate (AHAP). This Helicobacter pylori (strain G27) protein is 4-hydroxythreonine-4-phosphate dehydrogenase.